We begin with the raw amino-acid sequence, 361 residues long: Histidinol-phosphate aminotransferase (361 aa).

Position 219 is an N6-(pyridoxal phosphate)lysine (lysine 219).

The protein belongs to the class-II pyridoxal-phosphate-dependent aminotransferase family. Histidinol-phosphate aminotransferase subfamily. Homodimer. Pyridoxal 5'-phosphate is required as a cofactor.

It catalyses the reaction L-histidinol phosphate + 2-oxoglutarate = 3-(imidazol-4-yl)-2-oxopropyl phosphate + L-glutamate. It participates in amino-acid biosynthesis; L-histidine biosynthesis; L-histidine from 5-phospho-alpha-D-ribose 1-diphosphate: step 7/9. The chain is Histidinol-phosphate aminotransferase from Cereibacter sphaeroides (strain ATCC 17029 / ATH 2.4.9) (Rhodobacter sphaeroides).